The chain runs to 88 residues: Small ribosomal subunit protein bS20 (88 aa).

It belongs to the bacterial ribosomal protein bS20 family.

In terms of biological role, binds directly to 16S ribosomal RNA. The chain is Small ribosomal subunit protein bS20 from Clostridium botulinum (strain ATCC 19397 / Type A).